The primary structure comprises 371 residues: MPDAIEVRKVPIHSVADASELAKLIDDGVMQAERVIAIIGKTEGNGGVNDYTRIIADRAFREVLVEKGAPAEQVKQVPIVWSGGTDGVISPHATIFATVPPEDLTGALAPSDEQRLTVGFAMSERLAPEDIGRTAMITKVADAVKVAMERAGISDPADVHYVQTKTPLLTIHTIRDAKSRGKTVWTEHTHESMDLSNGCTALGIAVALGEIEMPSDEDVMHDRSLYSSVASCSSGVELDQAQVVVVGNAPGVGGRYRIGHSVMKDALDQDGIWEAIKDAGLDLPERPRTSDLDGRLVNVFLKCEASQDGLVRGRRNAMLDDSDVHWHRQIKSCVGGVTAAVTGDPAVFVSVSAAHQGPDGGGPVAAIVDLG.

The interval 1 to 103 is RU A; it reads MPDAIEVRKV…TIFATVPPED (103 aa). Substrate contacts are provided by residues R53 and 82–83; that span reads SG. The interval 115–250 is RU B; that stretch reads RLTVGFAMSE…AQVVVVGNAP (136 aa). The active site involves K165. Substrate contacts are provided by residues N197 and 233 to 234; that span reads SS. The active-site Nucleophile is S233. The tract at residues 256–371 is RU C; that stretch reads YRIGHSVMKD…GPVAAIVDLG (116 aa). E304 contributes to the Mg(2+) binding site. Substrate-binding positions include K331 and 350 to 351; that span reads SV. Residues A353, Q356, G357, P358, and G361 each contribute to the Mg(2+) site.

It belongs to the cyclic amide hydrolase (CyAH) family. As to quaternary structure, homotetramer.

The catalysed reaction is barbiturate + H2O = 3-oxo-3-ureidopropanoate. Its pathway is pyrimidine metabolism; uracil degradation via oxidative pathway; malonate and urea from uracil: step 2/3. Its activity is regulated as follows. Inhibited by cyanuric acid. Responsible for the hydrolysis of barbituric acid (2,4,6-trihydroxy-1,3-pyrimidine), an intermediate in the oxidative catabolism of pyrimidines. Catalyzes the hydrolytic opening of the pyrimidine ring of barbituric acid to yield ureidomalonic acid. This is Barbiturase 1 from Nocardioides sp. (strain ATCC BAA-499 / JS614).